The chain runs to 156 residues: Transcriptional repressor NrdR (156 aa).

A zinc finger lies at 3 to 34 (CPYCGETEDKVIDSRQGKEADVIRRRRECLSC). Positions 49–139 (LVIIKKDGRR…VYREFKHVND (91 aa)) constitute an ATP-cone domain.

It belongs to the NrdR family. The cofactor is Zn(2+).

In terms of biological role, negatively regulates transcription of bacterial ribonucleotide reductase nrd genes and operons by binding to NrdR-boxes. This Desulfatibacillum aliphaticivorans protein is Transcriptional repressor NrdR.